We begin with the raw amino-acid sequence, 367 residues long: Protein-glutamate methylesterase/protein-glutamine glutaminase (367 aa).

The region spanning 6 to 123 (RVLVVDDSAF…SLGIKQLADE (118 aa)) is the Response regulatory domain. Aspartate 57 bears the 4-aspartylphosphate mark. Residues 165–361 (ISKKEIVVVI…DILLKKVNEY (197 aa)) enclose the CheB-type methylesterase domain. Catalysis depends on residues serine 177, histidine 204, and aspartate 303.

This sequence belongs to the CheB family. In terms of processing, phosphorylated by CheA. Phosphorylation of the N-terminal regulatory domain activates the methylesterase activity.

It is found in the cytoplasm. It catalyses the reaction [protein]-L-glutamate 5-O-methyl ester + H2O = L-glutamyl-[protein] + methanol + H(+). The catalysed reaction is L-glutaminyl-[protein] + H2O = L-glutamyl-[protein] + NH4(+). Functionally, involved in chemotaxis. Part of a chemotaxis signal transduction system that modulates chemotaxis in response to various stimuli. Catalyzes the demethylation of specific methylglutamate residues introduced into the chemoreceptors (methyl-accepting chemotaxis proteins or MCP) by CheR. Also mediates the irreversible deamidation of specific glutamine residues to glutamic acid. The polypeptide is Protein-glutamate methylesterase/protein-glutamine glutaminase (Caldanaerobacter subterraneus subsp. tengcongensis (strain DSM 15242 / JCM 11007 / NBRC 100824 / MB4) (Thermoanaerobacter tengcongensis)).